A 593-amino-acid chain; its full sequence is Chaperone protein DnaK (593 aa).

Threonine 181 is modified (phosphothreonine; by autocatalysis).

The protein belongs to the heat shock protein 70 family.

Acts as a chaperone. The chain is Chaperone protein DnaK from Mycoplasmoides gallisepticum (strain R(low / passage 15 / clone 2)) (Mycoplasma gallisepticum).